The chain runs to 120 residues: NAD(P)H-quinone oxidoreductase subunit 3, chloroplastic (120 aa).

Helical transmembrane passes span 10 to 30, 64 to 84, and 89 to 109; these read FWLF…ISKI, MFAL…PWAM, and LGIS…IGLI.

It belongs to the complex I subunit 3 family. As to quaternary structure, NDH is composed of at least 16 different subunits, 5 of which are encoded in the nucleus.

It localises to the plastid. Its subcellular location is the chloroplast thylakoid membrane. The catalysed reaction is a plastoquinone + NADH + (n+1) H(+)(in) = a plastoquinol + NAD(+) + n H(+)(out). The enzyme catalyses a plastoquinone + NADPH + (n+1) H(+)(in) = a plastoquinol + NADP(+) + n H(+)(out). NDH shuttles electrons from NAD(P)H:plastoquinone, via FMN and iron-sulfur (Fe-S) centers, to quinones in the photosynthetic chain and possibly in a chloroplast respiratory chain. The immediate electron acceptor for the enzyme in this species is believed to be plastoquinone. Couples the redox reaction to proton translocation, and thus conserves the redox energy in a proton gradient. The chain is NAD(P)H-quinone oxidoreductase subunit 3, chloroplastic from Angiopteris evecta (Mule's foot fern).